Here is a 769-residue protein sequence, read N- to C-terminus: Phosphatidylinositol 4-phosphate 5-kinase 8 (769 aa).

8 MORN repeats span residues 16-38 (YSGQ…DGII), 39-61 (YEGD…SGAK), 62-84 (YEGD…DGSV), 85-107 (YAGA…NSDV), 108-130 (YDGS…NGNR), 131-153 (FIGN…NGDL), 154-176 (FNGF…DGGF), and 177-198 (YFGT…AGSK). The disordered stretch occupies residues 266-289 (PPRDFMHHGPSSKSARSVDSGQSE). Residues 276–288 (SSKSARSVDSGQS) show a composition bias toward polar residues. The 422-residue stretch at 344-765 (WNHYLMLNLQ…RFIDFLLKVF (422 aa)) folds into the PIPK domain. The activation loop stretch occupies residues 725–746 (YNMKKKVEHTCKSMKYDPMTIS).

It catalyses the reaction a 1,2-diacyl-sn-glycero-3-phospho-(1D-myo-inositol 4-phosphate) + ATP = a 1,2-diacyl-sn-glycero-3-phospho-(1D-myo-inositol-4,5-bisphosphate) + ADP + H(+). The protein is Phosphatidylinositol 4-phosphate 5-kinase 8 (PIP5K8) of Arabidopsis thaliana (Mouse-ear cress).